Reading from the N-terminus, the 208-residue chain is Small ribosomal subunit protein uS4 (208 aa).

The 61-residue stretch at 98–158 (GRLDNVVYRM…EKSKKQARIK (61 aa)) folds into the S4 RNA-binding domain.

The protein belongs to the universal ribosomal protein uS4 family. In terms of assembly, part of the 30S ribosomal subunit. Contacts protein S5. The interaction surface between S4 and S5 is involved in control of translational fidelity.

Functionally, one of the primary rRNA binding proteins, it binds directly to 16S rRNA where it nucleates assembly of the body of the 30S subunit. Its function is as follows. With S5 and S12 plays an important role in translational accuracy. This is Small ribosomal subunit protein uS4 from Haemophilus ducreyi (strain 35000HP / ATCC 700724).